The following is a 600-amino-acid chain: Novobiocin biosynthesis protein H (600 aa).

The disordered stretch occupies residues 505–526 (GGKTDRAGLPDPVKATQPAGLG). The Carrier domain occupies 526-600 (GPRTPAEKVL…QLAAIATLEE (75 aa)). Residue serine 561 is modified to O-(pantetheine 4'-phosphoryl)serine.

Belongs to the ATP-dependent AMP-binding enzyme family.

The protein operates within antibiotic biosynthesis; novobiocin biosynthesis. Its function is as follows. Together with NovI, involved in the formation of a beta-OH-Tyr intermediate in the novobiocin biosynthesis pathway, an aminocoumarin family antibiotic that targets bacterial DNA gyrases. The ATP-dependent AMP-binding region activates L-Tyr as L-tyrosyl-AMP and then transfers the L-tyrosyl group to the acyl carrier domain through thioester formation to form a tyrosyl-S intermediate that is covalently tethered to NovH (L-Tyr-S-NovH). This is Novobiocin biosynthesis protein H (novH) from Streptomyces niveus (Streptomyces spheroides).